The primary structure comprises 279 residues: Diaminopimelate epimerase (279 aa).

Substrate contacts are provided by Asn-11 and Asn-72. Cys-81 acts as the Proton donor in catalysis. Substrate-binding positions include 82 to 83 (GN), Asn-187, and 205 to 206 (ER). Cys-215 acts as the Proton acceptor in catalysis. 216–217 (GT) is a binding site for substrate.

Belongs to the diaminopimelate epimerase family. Homodimer.

It is found in the cytoplasm. The enzyme catalyses (2S,6S)-2,6-diaminopimelate = meso-2,6-diaminopimelate. It participates in amino-acid biosynthesis; L-lysine biosynthesis via DAP pathway; DL-2,6-diaminopimelate from LL-2,6-diaminopimelate: step 1/1. Its function is as follows. Catalyzes the stereoinversion of LL-2,6-diaminopimelate (L,L-DAP) to meso-diaminopimelate (meso-DAP), a precursor of L-lysine and an essential component of the bacterial peptidoglycan. This is Diaminopimelate epimerase from Aquifex aeolicus (strain VF5).